Consider the following 99-residue polypeptide: MISINEVQSIANYCKLRFNEQELNHMVKQLSSIVEMMNKLEKIDCTSVPPMRHFEENNRMRKDQVEQNITVDQLLSNVPQSSATIAKNTKYFVVPKIIE.

It belongs to the GatC family. Heterotrimer of A, B and C subunits.

It catalyses the reaction L-glutamyl-tRNA(Gln) + L-glutamine + ATP + H2O = L-glutaminyl-tRNA(Gln) + L-glutamate + ADP + phosphate + H(+). The catalysed reaction is L-aspartyl-tRNA(Asn) + L-glutamine + ATP + H2O = L-asparaginyl-tRNA(Asn) + L-glutamate + ADP + phosphate + 2 H(+). In terms of biological role, allows the formation of correctly charged Asn-tRNA(Asn) or Gln-tRNA(Gln) through the transamidation of misacylated Asp-tRNA(Asn) or Glu-tRNA(Gln) in organisms which lack either or both of asparaginyl-tRNA or glutaminyl-tRNA synthetases. The reaction takes place in the presence of glutamine and ATP through an activated phospho-Asp-tRNA(Asn) or phospho-Glu-tRNA(Gln). This Orientia tsutsugamushi (strain Ikeda) (Rickettsia tsutsugamushi) protein is Aspartyl/glutamyl-tRNA(Asn/Gln) amidotransferase subunit C.